Consider the following 546-residue polypeptide: Chaperonin GroEL (546 aa).

Residues 29–32, Lys50, 86–90, Gly414, and Asp495 each bind ATP; these read TLGP and DGTTT. A disordered region spans residues 526–546; it reads AKEGAPAGGGMPDMGGMGGMM. Residues 531–546 are compositionally biased toward gly residues; it reads PAGGGMPDMGGMGGMM.

This sequence belongs to the chaperonin (HSP60) family. Forms a cylinder of 14 subunits composed of two heptameric rings stacked back-to-back. Interacts with the co-chaperonin GroES.

The protein localises to the cytoplasm. It catalyses the reaction ATP + H2O + a folded polypeptide = ADP + phosphate + an unfolded polypeptide.. Together with its co-chaperonin GroES, plays an essential role in assisting protein folding. The GroEL-GroES system forms a nano-cage that allows encapsulation of the non-native substrate proteins and provides a physical environment optimized to promote and accelerate protein folding. In Jannaschia sp. (strain CCS1), this protein is Chaperonin GroEL.